Reading from the N-terminus, the 467-residue chain is Mothers against decapentaplegic homolog 2 (467 aa).

An N-acetylserine modification is found at serine 2. Residue threonine 8 is modified to Phosphothreonine; by MAPK3. One can recognise an MH1 domain in the interval 10 to 176 (PVVKRLLGWK…YQRVETPVLP (167 aa)). Lysine 19 is modified (N6-acetyllysine). Zn(2+)-binding residues include cysteine 74, cysteine 149, cysteine 161, and histidine 166. The segment covering 207–217 (PAGIEPQSNYI) has biased composition (polar residues). The segment at 207–251 (PAGIEPQSNYIPETPPPGYISEDGETSDQQLNQSMDTGSPAELSP) is disordered. Threonine 220 is modified (phosphothreonine). Residues 221–225 (PPPGY) carry the PY-motif motif. The span at 233-243 (SDQQLNQSMDT) shows a compositional bias: polar residues. Serine 240 is subject to Phosphoserine; by CAMK2. Phosphoserine occurs at positions 245, 250, 255, 458, 460, and 464. The region spanning 274-467 (WCSIAYYELN…SPSVRCSSMS (194 aa)) is the MH2 domain. Phosphoserine; by TGFBR1 is present on residues serine 465 and serine 467.

It belongs to the dwarfin/SMAD family. Monomer; in the absence of TGF-beta. Heterodimer; in the presence of TGF-beta. Forms a heterodimer with co-SMAD, SMAD4, in the nucleus to form the transactivation complex SMAD2/SMAD4. Found in a complex with SMAD3 and TRIM33 upon addition of TGF-beta. Identified in a complex that contains at least ZNF451, SMAD2, SMAD3 and SMAD4. Interacts (via the MH2 domain) with ZFYVE9; may form trimers with the SMAD4 co-SMAD. Interacts with TAZ/WWRT1. Interacts with FOXH1. Interacts with SNW1. Interacts with CREB-binding protein (CBP) and EP300. Interacts with SNON. Interacts with ALK4/ACVR1B. Interacts with SKOR1. Interacts with SKOR2. Interacts with PRDM16. Interacts (via MH2 domain) with LEMD3. Interacts with RBPMS. Interacts with WWP1. Interacts (dephosphorylated form, via the MH1 and MH2 domains) with RANBP3 (via its C-terminal R domain); the interaction results in the export of dephosphorylated SMAD3 out of the nucleus and termination of the TGF-beta signaling. Interacts with PDPK1 (via PH domain). Interacts with DAB2; the interactions are enhanced upon TGF-beta stimulation. Interacts with USP15. Interacts with PPP5C. Interacts with LDLRAD4 (via the SMAD interaction motif). Interacts (via MH2 domain) with PMEPA1 (via the SMAD interaction motif). Interacts with ZFHX3. Interacts with ZNF451. Interacts with SMURF2 when phosphorylated on Ser-465/467. Interacts with PPM1A. Interacts with TGF-beta. Interacts with TGFBR1. Interacts with TGIF. Interacts with SMAD3 and TRIM33. Interacts with ZNF580. Interacts with NEDD4L in response to TGF-beta. Interacts with HGS. Interacts with AIP1. Interacts with WWP1. Interacts with PML. Interacts weakly with ZNF8. Interacts (when phosphorylated) with RNF111; RNF111 acts as an enhancer of the transcriptional responses by mediating ubiquitination and degradation of SMAD2 inhibitors. Interacts with YAP1 (when phosphorylated at 'Ser-127'). Interacts when phosphorylated with IPO7; the interaction facilitates translocation of SMAD2 to the nucleus. Interacts with MTMR4; negatively regulates TGF-beta signaling through SMAD2 dephosphorylation and retention in endosomes. Post-translationally, phosphorylated on one or several of Thr-220, Ser-245, Ser-250, and Ser-255. In response to TGF-beta, phosphorylated on Ser-465/467 by TGF-beta and activin type 1 receptor kinases. TGF-beta-induced Ser-465/467 phosphorylation declines progressively in a KMT5A-dependent manner. Able to interact with SMURF2 when phosphorylated on Ser-465/467, recruiting other proteins, such as SNON, for degradation. In response to decorin, the naturally occurring inhibitor of TGF-beta signaling, phosphorylated on Ser-240 by CaMK2. Phosphorylated by MAPK3 upon EGF stimulation; which increases transcriptional activity and stability, and is blocked by calmodulin. Phosphorylated by PDPK1. In response to TGF-beta, ubiquitinated by NEDD4L; which promotes its degradation. Monoubiquitinated, leading to prevent DNA-binding. Deubiquitination by USP15 alleviates inhibition and promotes activation of TGF-beta target genes. Ubiquitinated by RNF111, leading to its degradation: only SMAD2 proteins that are 'in use' are targeted by RNF111, RNF111 playing a key role in activating SMAD2 and regulating its turnover. In terms of processing, acetylated on Lys-19 by coactivators in response to TGF-beta signaling, which increases transcriptional activity. Isoform short: Acetylation increases DNA binding activity in vitro and enhances its association with target promoters in vivo. Acetylation in the nucleus by EP300 is enhanced by TGF-beta. Expressed at high levels in skeletal muscle, endothelial cells, heart and placenta.

The protein resides in the cytoplasm. It localises to the nucleus. In terms of biological role, receptor-regulated SMAD (R-SMAD) that is an intracellular signal transducer and transcriptional modulator activated by TGF-beta (transforming growth factor) and activin type 1 receptor kinases. Binds the TRE element in the promoter region of many genes that are regulated by TGF-beta and, on formation of the SMAD2/SMAD4 complex, activates transcription. Promotes TGFB1-mediated transcription of odontoblastic differentiation genes in dental papilla cells. Positively regulates PDPK1 kinase activity by stimulating its dissociation from the 14-3-3 protein YWHAQ which acts as a negative regulator. May act as a tumor suppressor in colorectal carcinoma. This Homo sapiens (Human) protein is Mothers against decapentaplegic homolog 2 (SMAD2).